A 313-amino-acid polypeptide reads, in one-letter code: L-lactate dehydrogenase (313 aa).

Residues Val11, Asp32, Arg37, Tyr62, and 76–77 contribute to the NAD(+) site; that span reads GV. Residues Gln79, Arg85, and 117-120 each bind substrate; that span reads NPVD. NAD(+) is bound by residues 115 to 117 and Ser143; that span reads ASN. 148–151 is a substrate binding site; that stretch reads DTAR. The beta-D-fructose 1,6-bisphosphate site is built by Arg153 and His168. His175 (proton acceptor) is an active-site residue. Tyr221 carries the post-translational modification Phosphotyrosine. Thr230 provides a ligand contact to substrate.

It belongs to the LDH/MDH superfamily. LDH family. In terms of assembly, homotetramer.

It localises to the cytoplasm. The catalysed reaction is (S)-lactate + NAD(+) = pyruvate + NADH + H(+). The protein operates within fermentation; pyruvate fermentation to lactate; (S)-lactate from pyruvate: step 1/1. With respect to regulation, allosterically activated by fructose 1,6-bisphosphate (FBP). In terms of biological role, catalyzes the conversion of lactate to pyruvate. In Geotalea daltonii (strain DSM 22248 / JCM 15807 / FRC-32) (Geobacter daltonii), this protein is L-lactate dehydrogenase.